The sequence spans 392 residues: Chorismate synthase (392 aa).

Positions 40 and 46 each coordinate NADP(+). FMN is bound by residues Arg-135–Ser-137, Gln-256–Ala-257, Gly-300, Lys-315–Ser-319, and Arg-341.

This sequence belongs to the chorismate synthase family. Homotetramer. The cofactor is FMNH2.

It carries out the reaction 5-O-(1-carboxyvinyl)-3-phosphoshikimate = chorismate + phosphate. The protein operates within metabolic intermediate biosynthesis; chorismate biosynthesis; chorismate from D-erythrose 4-phosphate and phosphoenolpyruvate: step 7/7. Functionally, catalyzes the anti-1,4-elimination of the C-3 phosphate and the C-6 proR hydrogen from 5-enolpyruvylshikimate-3-phosphate (EPSP) to yield chorismate, which is the branch point compound that serves as the starting substrate for the three terminal pathways of aromatic amino acid biosynthesis. This reaction introduces a second double bond into the aromatic ring system. The polypeptide is Chorismate synthase (Salinispora tropica (strain ATCC BAA-916 / DSM 44818 / JCM 13857 / NBRC 105044 / CNB-440)).